A 116-amino-acid polypeptide reads, in one-letter code: Large ribosomal subunit protein bL17 (116 aa).

This sequence belongs to the bacterial ribosomal protein bL17 family. As to quaternary structure, part of the 50S ribosomal subunit. Contacts protein L32.

This Microcystis aeruginosa (strain NIES-843 / IAM M-2473) protein is Large ribosomal subunit protein bL17.